The primary structure comprises 428 residues: Dihydroorotase (428 aa).

Residues His-59 and His-61 each contribute to the Zn(2+) site. Substrate contacts are provided by residues 61–63 and Asn-93; that span reads HLR. Zn(2+) contacts are provided by Asp-151, His-178, and His-231. Residue Asn-277 coordinates substrate. Asp-304 contributes to the Zn(2+) binding site. Asp-304 is an active-site residue. Residues His-308 and 322 to 323 contribute to the substrate site; that span reads FG.

Belongs to the metallo-dependent hydrolases superfamily. DHOase family. Class I DHOase subfamily. Zn(2+) is required as a cofactor.

It catalyses the reaction (S)-dihydroorotate + H2O = N-carbamoyl-L-aspartate + H(+). Its pathway is pyrimidine metabolism; UMP biosynthesis via de novo pathway; (S)-dihydroorotate from bicarbonate: step 3/3. Catalyzes the reversible cyclization of carbamoyl aspartate to dihydroorotate. The polypeptide is Dihydroorotase (Halalkalibacterium halodurans (strain ATCC BAA-125 / DSM 18197 / FERM 7344 / JCM 9153 / C-125) (Bacillus halodurans)).